The following is a 360-amino-acid chain: Peptide chain release factor 1 (360 aa).

At Gln235 the chain carries N5-methylglutamine.

It belongs to the prokaryotic/mitochondrial release factor family. In terms of processing, methylated by PrmC. Methylation increases the termination efficiency of RF1.

The protein resides in the cytoplasm. In terms of biological role, peptide chain release factor 1 directs the termination of translation in response to the peptide chain termination codons UAG and UAA. This chain is Peptide chain release factor 1, found in Burkholderia mallei (strain NCTC 10247).